Reading from the N-terminus, the 542-residue chain is Organic anion transporter 3 (542 aa).

The Cytoplasmic portion of the chain corresponds to 1–9 (MTFSEILDR). Phosphoserine is present on Ser-4. The helical transmembrane segment at 10–30 (VGSMGHFQFLHVAILGLPILN) threads the bilayer. The Extracellular segment spans residues 31-123 (MANHNLLQIF…LVCNSNKLKE (93 aa)). Asn-86 and Asn-102 each carry an N-linked (GlcNAc...) asparagine glycan. A helical transmembrane segment spans residues 124–144 (MAQSIFMAGILIGGLVLGDLS). Topologically, residues 145–154 (DRFGRRPILT) are cytoplasmic. The helical transmembrane segment at 155–175 (CSYLLLAASGSGAAFSPTFPI) threads the bilayer. Position 176 (Tyr-176) is a topological domain, extracellular. The helical transmembrane segment at 177–197 (MVFRFLCGFGISGITLSTVIL) threads the bilayer. Over 198–212 (NVEWVPTRMRAIMST) the chain is Cytoplasmic. Residues 213 to 233 (ALGYCYTFGQFILPGLAYAIP) traverse the membrane as a helical segment. Topologically, residues 234 to 236 (QWR) are extracellular. A helical transmembrane segment spans residues 237 to 257 (WLQLTVSIPFFVFFLSSWWTP). The Cytoplasmic portion of the chain corresponds to 258–327 (ESIRWLVLSG…FRIPMLRRMT (70 aa)). The chain crosses the membrane as a helical span at residues 328–348 (FCLSLAWFATGFAYYSLAMGV). Residues 349–354 (EEFGVN) are Extracellular-facing. Residues 355–375 (LYILQIIFGGVDVPAKFITIL) form a helical membrane-spanning segment. Over 376–386 (SLSYLGRHTTQ) the chain is Cytoplasmic. The helical transmembrane segment at 387-407 (AAALLLAGGAILALTFVPLDL) threads the bilayer. Residues 408–411 (QTVR) are Extracellular-facing. A helical membrane pass occupies residues 412–432 (TVLAVFGKGCLSSSFSCLFLY). Residues 433 to 471 (TSELYPTVIRQTGMGVSNLWTRVGSMVSPLVKITGEVQP) are Cytoplasmic-facing. A helical transmembrane segment spans residues 472–492 (FIPNIIYGITALLGGSAALFL). Residues 493–542 (PETLNQPLPETIEDLENWSLRAKKPKQEPEVEKASQRIPLQPHGPGLGSS) lie on the Extracellular side of the membrane. The segment at 515–542 (KKPKQEPEVEKASQRIPLQPHGPGLGSS) is disordered. Over residues 517–527 (PKQEPEVEKAS) the composition is skewed to basic and acidic residues.

This sequence belongs to the major facilitator (TC 2.A.1) superfamily. Organic cation transporter (TC 2.A.1.19) family. As to expression, strongly expressed in kidney. Weaker expression in brain and skeletal muscle. Expressed in adrenal glands.

The protein resides in the basolateral cell membrane. The catalysed reaction is estrone 3-sulfate(out) + glutarate(in) = estrone 3-sulfate(in) + glutarate(out). The enzyme catalyses estrone 3-sulfate(in) + 2-oxoglutarate(out) = estrone 3-sulfate(out) + 2-oxoglutarate(in). It carries out the reaction glutarate(in) + 2-oxoglutarate(out) = glutarate(out) + 2-oxoglutarate(in). It catalyses the reaction urate(in) + 2-oxoglutarate(out) = urate(out) + 2-oxoglutarate(in). The catalysed reaction is taurocholate(out) + glutarate(in) = taurocholate(in) + glutarate(out). The enzyme catalyses dehydroepiandrosterone 3-sulfate(out) + glutarate(in) = dehydroepiandrosterone 3-sulfate(in) + glutarate(out). It carries out the reaction prostaglandin F2alpha(out) + glutarate(in) = prostaglandin F2alpha(in) + glutarate(out). It catalyses the reaction prostaglandin F2alpha(out) + 2-oxoglutarate(in) = prostaglandin F2alpha(in) + 2-oxoglutarate(out). The catalysed reaction is (R)-carnitine(out) + 2-oxoglutarate(in) = (R)-carnitine(in) + 2-oxoglutarate(out). The enzyme catalyses glutarate(in) + (R)-carnitine(out) = glutarate(out) + (R)-carnitine(in). It carries out the reaction prostaglandin E2(out) + 2-oxoglutarate(in) = prostaglandin E2(in) + 2-oxoglutarate(out). It catalyses the reaction prostaglandin E2(out) + glutarate(in) = prostaglandin E2(in) + glutarate(out). The catalysed reaction is urate(in) + glutarate(out) = urate(out) + glutarate(in). The enzyme catalyses taurocholate(out) + 2-oxoglutarate(in) = taurocholate(in) + 2-oxoglutarate(out). It carries out the reaction dehydroepiandrosterone 3-sulfate(out) + 2-oxoglutarate(in) = dehydroepiandrosterone 3-sulfate(in) + 2-oxoglutarate(out). It catalyses the reaction kynurenate(out) + a dicarboxylate(in) = kynurenate(in) + a dicarboxylate(out). The catalysed reaction is (indol-3-yl)acetate(out) + a dicarboxylate(in) = (indol-3-yl)acetate(in) + a dicarboxylate(out). The enzyme catalyses indoxyl sulfate(out) + a dicarboxylate(in) = indoxyl sulfate(in) + a dicarboxylate(out). It carries out the reaction N-benzoylglycine(out) + a dicarboxylate(in) = N-benzoylglycine(in) + a dicarboxylate(out). It catalyses the reaction 3-carboxy-4-methyl-5-propyl-2-furanpropanoate(out) + a dicarboxylate(in) = 3-carboxy-4-methyl-5-propyl-2-furanpropanoate(in) + a dicarboxylate(out). The catalysed reaction is (6R)-L-erythro-5,6,7,8-tetrahydrobiopterin(out) + a dicarboxylate(in) = (6R)-L-erythro-5,6,7,8-tetrahydrobiopterin(in) + a dicarboxylate(out). The enzyme catalyses L-erythro-7,8-dihydrobiopterin(out) + a dicarboxylate(in) = L-erythro-7,8-dihydrobiopterin(in) + a dicarboxylate(out). It carries out the reaction L-sepiapterin(out) + a dicarboxylate(in) = L-sepiapterin(in) + a dicarboxylate(out). In terms of biological role, functions as an organic anion/dicarboxylate exchanger that couples organic anion uptake indirectly to the sodium gradient. Transports organic anions such as estrone 3-sulfate (E1S) and urate in exchange for dicarboxylates such as glutarate or ketoglutarate (2-oxoglutarate). Plays an important role in the excretion of endogenous and exogenous organic anions, especially from the kidney and the brain. E1S transport is pH- and chloride-dependent and may also involve E1S/cGMP exchange. Responsible for the transport of prostaglandin E2 (PGE2) and prostaglandin F2(alpha) (PGF2(alpha)) in the basolateral side of the renal tubule. Involved in the transport of neuroactive tryptophan metabolites kynurenate and xanthurenate. Functions as a biopterin transporters involved in the uptake and the secretion of coenzymes tetrahydrobiopterin (BH4), dihydrobiopterin (BH2) and sepiapterin to urine, thereby determining baseline levels of blood biopterins. May be involved in the basolateral transport of steviol, a metabolite of the popular sugar substitute stevioside. May participate in the detoxification/ renal excretion of drugs and xenobiotics, such as the histamine H(2)-receptor antagonists fexofenadine and cimetidine, the antibiotic benzylpenicillin (PCG), the anionic herbicide 2,4-dichloro-phenoxyacetate (2,4-D), the diagnostic agent p-aminohippurate (PAH), the antiviral acyclovir (ACV), and the mycotoxin ochratoxin (OTA), by transporting these exogenous organic anions across the cell membrane in exchange for dicarboxylates such as 2-oxoglutarate. Contributes to the renal uptake of potent uremic toxins (indoxyl sulfate (IS), indole acetate (IA), hippurate/N-benzoylglycine (HA) and 3-carboxy-4-methyl-5-propyl-2-furanpropionate (CMPF)), pravastatin, PCG, E1S and dehydroepiandrosterone sulfate (DHEAS), and is partly involved in the renal uptake of temocaprilat (an angiotensin-converting enzyme (ACE) inhibitor). May contribute to the release of cortisol in the adrenals. Involved in one of the detoxification systems on the choroid plexus (CP), removes substrates such as E1S or taurocholate (TC), PCG, 2,4-D and PAH, from the cerebrospinal fluid (CSF) to the blood for eventual excretion in urine and bile. Also contributes to the uptake of several other organic compounds such as the prostanoids prostaglandin E(2) and prostaglandin F(2-alpha), L-carnitine, and the therapeutic drugs allopurinol, 6-mercaptopurine (6-MP) and 5-fluorouracil (5-FU). Mediates the transport of PAH, PCG, and the statins pravastatin and pitavastatin, from the cerebrum into the blood circulation across the blood-brain barrier (BBB). In summary, plays a role in the efflux of drugs and xenobiotics, helping reduce their undesired toxicological effects on the body. The chain is Organic anion transporter 3 from Homo sapiens (Human).